A 297-amino-acid polypeptide reads, in one-letter code: Phosphoribosylaminoimidazole-succinocarboxamide synthase (297 aa).

The protein belongs to the SAICAR synthetase family.

The catalysed reaction is 5-amino-1-(5-phospho-D-ribosyl)imidazole-4-carboxylate + L-aspartate + ATP = (2S)-2-[5-amino-1-(5-phospho-beta-D-ribosyl)imidazole-4-carboxamido]succinate + ADP + phosphate + 2 H(+). The protein operates within purine metabolism; IMP biosynthesis via de novo pathway; 5-amino-1-(5-phospho-D-ribosyl)imidazole-4-carboxamide from 5-amino-1-(5-phospho-D-ribosyl)imidazole-4-carboxylate: step 1/2. This chain is Phosphoribosylaminoimidazole-succinocarboxamide synthase, found in Mycobacterium tuberculosis (strain ATCC 25177 / H37Ra).